Reading from the N-terminus, the 77-residue chain is Ubiquitin-like protein NEDD8 (77 aa).

The tract at residues 70-72 (VLA) is interaction with uba-3. Residue Gly-76 forms a Glycyl lysine isopeptide (Gly-Lys) (interchain with K-? in acceptor proteins) linkage. A propeptide is located at residue Phe-77.

Belongs to the ubiquitin family. As to quaternary structure, interacts with dcn-1. Covalently attached to cullins. May interact with atx-3. Post-translationally, cleavage of precursor form is necessary for function.

The protein localises to the nucleus. It localises to the cytoplasm. Its function is as follows. Ubiquitin-like protein which plays an important role in cell cycle control and embryogenesis. Covalent attachment to its substrates requires prior activation by the E1 complex uba-3-ula-1 and linkage to the E2 enzyme ubc-12. Attachment of ned-8 to cullins activates their associated E3 ubiquitin ligase activity, and thus promotes polyubiquitination and proteasomal degradation of cyclins and other regulatory proteins. This chain is Ubiquitin-like protein NEDD8 (ned-8), found in Caenorhabditis elegans.